A 67-amino-acid chain; its full sequence is Conotoxin TsMMSK-B021 (67 aa).

A signal peptide spans 1–20 (MMSKLGVLLTICLLLFPLTA). Residues 21-50 (VQLDGDQPADLPELRAQDFAPERSPWFDPV) constitute a propeptide that is removed on maturation. 3 disulfides stabilise this stretch: C53-C65, C54-C61, and C58-C64. P63 carries the 4-hydroxyproline modification.

It belongs to the conotoxin M superfamily. Expressed by the venom duct.

It localises to the secreted. The sequence is that of Conotoxin TsMMSK-B021 from Conus tessulatus (Tessellate cone).